A 151-amino-acid polypeptide reads, in one-letter code: Epigen (151 aa).

An N-terminal signal peptide occupies residues 1 to 18 (MAFGMLIYILLKAMGALS). The Extracellular segment spans residues 19–108 (EEAALTASSL…NSYAHNSYER (90 aa)). Asn39 is a glycosylation site (N-linked (GlcNAc...) asparagine). The EGF-like domain maps to 54 to 94 (LMQTCLEEHHSYCINGLCAFHSELRKPICKCLAGYNGERCE). Cystine bridges form between Cys58-Cys71, Cys66-Cys82, and Cys84-Cys93. The helical transmembrane segment at 109-129 (YIAVGIGIGILTSGILAIIYC) threads the bilayer. The Cytoplasmic segment spans residues 130–151 (YVRKRCRKLKSPYKVCMGETAL).

Its subcellular location is the membrane. In terms of biological role, promotes the growth of epithelial cells. The polypeptide is Epigen (EPGN) (Gallus gallus (Chicken)).